Reading from the N-terminus, the 690-residue chain is Proprotein convertase subtilisin/kexin type 9 (690 aa).

The first 28 residues, 1-28 (MGTVSSRRSWWPLPLLLLLLLGPAGARA), serve as a signal peptide directing secretion. A propeptide spanning residues 29–150 (QEDEDGDYEE…IEEDSSVFAQ (122 aa)) is cleaved from the precursor. Residue Tyr-36 is modified to Sulfotyrosine. Ser-45 bears the Phosphoserine mark. An Inhibitor I9 domain is found at 75–147 (TYVVVLKEET…VDYIEEDSSV (73 aa)). Residues 153-459 (PWNLERITPP…GWQLFCRTVW (307 aa)) form the Peptidase S8 domain. Active-site charge relay system residues include Asp-184 and His-224. 2 disulfide bridges follow: Cys-221–Cys-253 and Cys-321–Cys-356. Ser-384 serves as the catalytic Charge relay system. Positions 448-690 (GAGWQLFCRT…HLAQASQELQ (243 aa)) are C-terminal domain. Disulfide bonds link Cys-455–Cys-525, Cys-475–Cys-524, and Cys-484–Cys-507. An N-linked (GlcNAc...) asparagine glycan is attached at Asn-531. Cystine bridges form between Cys-532–Cys-599, Cys-550–Cys-598, Cys-560–Cys-586, Cys-606–Cys-677, Cys-624–Cys-676, and Cys-633–Cys-652. The residue at position 686 (Ser-686) is a Phosphoserine.

Belongs to the peptidase S8 family. As to quaternary structure, monomer. Can self-associate to form dimers and higher multimers which may have increased LDLR degrading activity. The precursor protein but not the mature protein may form multimers. Interacts with APOB, VLDLR, LRP8/APOER2 and BACE1. The full-length immature form (pro-PCSK9) interacts with SCNN1A, SCNN1B and SCNN1G. The pro-PCSK9 form (via C-terminal domain) interacts with LDLR. Interacts (via the C-terminal domain) with ANXA2 (via repeat Annexin 1); the interaction inhibits the degradation of LDLR. Ca(2+) is required as a cofactor. Cleavage by furin and PCSK5 generates a truncated inactive protein that is unable to induce LDLR degradation. In terms of processing, undergoes autocatalytic cleavage in the endoplasmic reticulum to release the propeptide from the N-terminus and the cleavage of the propeptide is strictly required for its maturation and activation. The cleaved propeptide however remains associated with the catalytic domain through non-covalent interactions, preventing potential substrates from accessing its active site. As a result, it is secreted from cells as a propeptide-containing, enzymatically inactive protein. Post-translationally, phosphorylation protects the propeptide against proteolysis.

The protein localises to the cytoplasm. It localises to the secreted. Its subcellular location is the endosome. The protein resides in the lysosome. It is found in the cell surface. The protein localises to the endoplasmic reticulum. It localises to the golgi apparatus. Its activity is regulated as follows. Its proteolytic activity is autoinhibited by the non-covalent binding of the propeptide to the catalytic domain. Inhibited by EGTA. Its function is as follows. Crucial player in the regulation of plasma cholesterol homeostasis. Binds to low-density lipid receptor family members: low density lipoprotein receptor (LDLR), very low density lipoprotein receptor (VLDLR), apolipoprotein E receptor (LRP1/APOER) and apolipoprotein receptor 2 (LRP8/APOER2), and promotes their degradation in intracellular acidic compartments. Acts via a non-proteolytic mechanism to enhance the degradation of the hepatic LDLR through a clathrin LDLRAP1/ARH-mediated pathway. May prevent the recycling of LDLR from endosomes to the cell surface or direct it to lysosomes for degradation. Can induce ubiquitination of LDLR leading to its subsequent degradation. Inhibits intracellular degradation of APOB via the autophagosome/lysosome pathway in a LDLR-independent manner. Involved in the disposal of non-acetylated intermediates of BACE1 in the early secretory pathway. Inhibits epithelial Na(+) channel (ENaC)-mediated Na(+) absorption by reducing ENaC surface expression primarily by increasing its proteasomal degradation. Regulates neuronal apoptosis via modulation of LRP8/APOER2 levels and related anti-apoptotic signaling pathways. In Pongo pygmaeus (Bornean orangutan), this protein is Proprotein convertase subtilisin/kexin type 9 (PCSK9).